The following is a 138-amino-acid chain: Basic phospholipase A2 ammodytoxin C (138 aa).

A signal peptide spans 1 to 16; that stretch reads MRTLWIVAVCLIGVEG. 7 disulfides stabilise this stretch: Cys42–Cys131, Cys44–Cys60, Cys59–Cys111, Cys65–Cys138, Cys66–Cys104, Cys73–Cys97, and Cys91–Cys102. Residues Tyr43, Gly45, and Gly47 each coordinate Ca(2+). The active site involves His63. Asp64 is a binding site for Ca(2+). Asp105 is an active-site residue.

It belongs to the phospholipase A2 family. Group II subfamily. D49 sub-subfamily. As to quaternary structure, monomer. Binds to calmodulin, coagulation factor X (F10), 14-3-3 proteins gamma (YWHAG) and epsilon (YWHAE), and R25, a mitochondrial membrane protein. May bind to M-type PLA2 receptor (R-180). The cofactor is Ca(2+). Expressed by the venom gland.

It is found in the secreted. The protein localises to the host cytoplasm. The protein resides in the host cytosol. It catalyses the reaction a 1,2-diacyl-sn-glycero-3-phosphocholine + H2O = a 1-acyl-sn-glycero-3-phosphocholine + a fatty acid + H(+). Its function is as follows. Snake venom phospholipase A2 (PLA2) that acts as a presynaptic neurotoxin, an inhibitor of blood coagulation, and has been found to bind with high affinity to intracellular proteins. The response of indirectly stimulated neuromuscular preparations to ammodytoxin (Atx) is triphasic. The first phase, the transient inhibition of the acetylcholine (ACh) release, starts soon after the addition of Atx and lasts for several minutes. This phase is probably independent of Atx enzymatic activity. The effect may be due to the specific binding of the toxin to presynaptic receptors. These receptors, called N-type receptors, are still unidentified. It is noteworthy that a neuronal isoform of the M-type PLA2 receptor (R180) has been identified as a high-affinity receptor for Atx in neuronal plasma membranes. It was demonstrated however that this receptor is not essential for expression of neurotoxicity by Atx. The second phase corresponds to an augmentation of neurotransmitter release. A peak is reached 10-20 minutes after exposure of the preparation to Atx and is followed by a gradual reduction. In this phase, the enzymatic activity of Atx of the mammalian is not significant. It is speculated that the increased release of neurotransmitter in this phase is induced by the interference of Atx with voltage-gated potassium channels. Measurements of ionic showed however that voltage-gated potassium channels are not affected by Atx. The third phase of the response of neuromuscular preparations to Atx, which corresponds to a complete and irreversible paralysis, is clearly dependent on the hydrolytic activity of the toxin. In addition to its presynaptic neurotoxicity, Atx shows an anticoagulant activity by binding with high affinity to activated coagulation factor X (F10) thus inhibiting the formation of the prothrombinase complex (FX/FV) and its activity (IC(50) is 240 nM). Surprisingly, Atx was discovered to bind intracellular proteins such as calmodulin (CaM), 14-3-3 proteins gamma (YWHAG) and epsilon (YWHAE), as well as R25, a mitochondrial integral membrane protein found in cerebral cortex. These findings raised a doubt about the dogma of the exclusively extracellular action of PLA2s, defended by the potential instability of these molecules in the reducing environment of the eukaryotic cytosol coupled with their possible inability to act as enzymes in this cellular compartment, due to too low concentration of calcium ions. This hypothesis was challenged efficiently by demonstrating the internalization of AtxA into a culture cells, but still remains to be directly demonstrated in vivo. PLA2 catalyzes the calcium-dependent hydrolysis of the 2-acyl groups in 3-sn-phosphoglycerides. In Vipera ammodytes ammodytes (Western sand viper), this protein is Basic phospholipase A2 ammodytoxin C.